Here is a 1185-residue protein sequence, read N- to C-terminus: METQDTLTMIDLTSSVPSLSLSNVIQQQNEVIESENKNVNTELLTLSTQTVISFVYCNRQASLFNLLTQMLTTNTFSPINPSVEIPFQPSPYPSTIHNNSSTSINQSSSPSSSSSTTPSSSTQSSPILQGNNNNITGKPSLMFNILDKAINAISHQYKKNFYIHILEKPISSPNLISTNPNNNSNNNNNNNNNTAEDHDKLVAGCLSFINHMLSSAPSYFDFERYRQVLSSQGVNEVIKTFVKSVNPNVRLELLHYQKHKINGIKASKQTSIFLDRQNVLSFLNRLCKMSFPNNGGDSPTTNEEKMKLLGFETDDLHLELQSTGLLGIRNMIYFCARYFRIYDEILKAQIKKFKEININNNNNSNNNDENNNNNNNNNNNNNNNNNNNNNNNNNSDNVENNNNNNVENEDDSYYSFSRVGFTLTNLIFELYIEDENLYEIIFDQDDWFEELFCISFELFDEIWEREGTCQEDYIPVLHKTRAVLSRIKWTNPSSIASFQKTLGCVLDEMWSKTNDLKEEKEMNARAGGLSDSIMGVPHGNANGGSGASGNLRFKKFFNEKFKQYRKSTDSINSDGSEAIFQPPPQSPQSQQQSQQQTQQTQQPASPLQTSSSSDIQKSPVPHKINTKSMSFKKLFSDLKSAETERKNSLTGSNGITDGGDSNPNSGAEVLSLPNTPRYLGGDNDNEGSENGSSSSFSFEKLSRKLRSGSSSIKDKSSSPKFNSLTGELTMNISSSSSLEGNQQQQQQQSTNSSTTSPNVSPYLQSVTTTTTNTTTATTTTDDQSQQQVPPQFNIDDGKRSLKSSGNSIYKSVKKAMSNLGEKGKDIGKKVKSKKEKKKKSKQQVEHSFEDDCNNSANNSSYNNSPYIIPGDLELPTNFRPSLDLDFDKNSDSSYEDSENETNTLDDIQSIDSSSNNNSNNNSNNNSSSNLNNNSTSSINLMNDQSLQSVQQPQPQQQQQQQQQQQQPIVEQQPQANLEKEQNNSSTQVTPIISSAKLDVNEKLESIPTVIIEPIDDDNNNNGINRSISDQSLTDAMSLNYQITQKQKSRLSTDENQNQNNNNNKLSDNSSNEQHPVSPSYPRRQINIINGGGGSAGRNSTLNSGSSSLSKKPVLSRAPIPSVFSSSSHNPPAMVKSPSIKHLVTFFEVKSSELKDNSSTVSGSVNNNLNVGIPQLKREKSFKSDF.

8 disordered regions span residues 88–133, 176–196, 361–409, 566–628, 642–805, 819–868, 883–989, and 1044–1114; these read QPSP…GNNN, ISTNPNNNSNNNNNNNNNTAE, NNNS…VENE, KSTD…NTKS, ETER…KSSG, LGEK…PYII, DLDF…TQVT, and QKQK…KPVL. Low complexity-rich tracts occupy residues 94 to 127, 176 to 194, 361 to 406, and 587 to 613; these read STIHNNSSTSINQSSSPSSSSSTTPSSSTQSSPI, ISTNPNNNSNNNNNNNNNT, NNNS…NNNV, and PQSQQQSQQQTQQTQQPASPLQTSSSS. Positions 275–488 constitute an ELMO domain; sequence DRQNVLSFLN…KTRAVLSRIK (214 aa). Polar residues predominate over residues 648–665; it reads SLTGSNGITDGGDSNPNS. Over residues 688 to 699 the composition is skewed to low complexity; that stretch reads SENGSSSSFSFE. Residues 721–732 are compositionally biased toward polar residues; it reads FNSLTGELTMNI. Low complexity-rich tracts occupy residues 733 to 760 and 767 to 780; these read SSSSSLEGNQQQQQQQSTNSSTTSPNVS and TTTTTNTTTATTTT. The segment covering 781-790 has biased composition (polar residues); the sequence is DDQSQQQVPP. Over residues 829–841 the composition is skewed to basic residues; that stretch reads KVKSKKEKKKKSK. Low complexity-rich tracts occupy residues 853–864, 912–974, 1053–1072, and 1096–1109; these read NNSANNSSYNNS, SSSN…QQPQ, DENQNQNNNNNKLSDNSSNE, and GRNSTLNSGSSSLS.

In Dictyostelium discoideum (Social amoeba), this protein is ELMO domain-containing protein F (elmoF).